Consider the following 298-residue polypeptide: NADH-cytochrome b5 reductase 1 (298 aa).

A helical membrane pass occupies residues 14 to 34; that stretch reads VILAGAYLIDPSALPFVAAGV. Residues 56 to 159 form the FAD-binding FR-type domain; the sequence is KEYRKFKLVD…RGPKGQFSYT (104 aa). FAD is bound by residues 139–154 and 165–197; these read SELS…GPKG and AIGM…QVNF.

This sequence belongs to the flavoprotein pyridine nucleotide cytochrome reductase family. As to quaternary structure, monomer. Component of the 2-(3-amino-3-carboxypropyl)histidine synthase complex composed of DPH1, DPH2, DPH3 and a NADH-dependent reductase, predominantly CBR1. FAD is required as a cofactor.

The protein resides in the mitochondrion outer membrane. The catalysed reaction is 2 Fe(III)-[cytochrome b5] + NADH = 2 Fe(II)-[cytochrome b5] + NAD(+) + H(+). It catalyses the reaction 2 Fe(3+)-[Dph3] + NADH = 2 Fe(2+)-[Dph3] + NAD(+) + H(+). Its pathway is protein modification; peptidyl-diphthamide biosynthesis. In terms of biological role, NADH-dependent reductase for DPH3 and cytochrome b5. Required for the first step of diphthamide biosynthesis, a post-translational modification of histidine which occurs in elongation factor 2. DPH1 and DPH2 transfer a 3-amino-3-carboxypropyl (ACP) group from S-adenosyl-L-methionine (SAM) to a histidine residue, the reaction is assisted by a reduction system comprising DPH3 and a NADH-dependent reductase, predominantly CBR1. By reducing DPH3, also involved in the formation of the tRNA wobble base modification mcm5s 2U (5-methoxycarbonylmethyl-2-thiouridine), mediated by the elongator complex. The cytochrome b5/NADH cytochrome b5 reductase electron transfer system supports the catalytic activity of several sterol biosynthetic enzymes. In Mortierella alpina (Oleaginous fungus), this protein is NADH-cytochrome b5 reductase 1 (CBR1).